Consider the following 462-residue polypeptide: ATP synthase subunit beta (462 aa).

ATP is bound at residue 150-157; sequence GGAGVGKT.

The protein belongs to the ATPase alpha/beta chains family. As to quaternary structure, F-type ATPases have 2 components, CF(1) - the catalytic core - and CF(0) - the membrane proton channel. CF(1) has five subunits: alpha(3), beta(3), gamma(1), delta(1), epsilon(1). CF(0) has three main subunits: a(1), b(2) and c(9-12). The alpha and beta chains form an alternating ring which encloses part of the gamma chain. CF(1) is attached to CF(0) by a central stalk formed by the gamma and epsilon chains, while a peripheral stalk is formed by the delta and b chains.

It localises to the cell membrane. It carries out the reaction ATP + H2O + 4 H(+)(in) = ADP + phosphate + 5 H(+)(out). Produces ATP from ADP in the presence of a proton gradient across the membrane. The catalytic sites are hosted primarily by the beta subunits. This chain is ATP synthase subunit beta, found in Wigglesworthia glossinidia brevipalpis.